We begin with the raw amino-acid sequence, 2742 residues long: Neurobeachin-like protein 2 (2742 aa).

Disordered regions lie at residues 1312-1333 and 1356-1434; these read ALSP…PSES and LERA…QQTP. Pro residues predominate over residues 1384–1394; that stretch reads TPSPLDGPRPF. A compositionally biased stretch (polar residues) spans 1421–1433; sequence GDDTSNTSNPQQT. The residue at position 1855 (T1855) is a Phosphothreonine. A BEACH-type PH domain is found at 1903-2028; sequence EKREKLVLSA…LRNQVYSLLL (126 aa). Positions 2041 to 2333 constitute a BEACH domain; the sequence is RSPLEMLRAS…QLLKEPHPPR (293 aa). 7 WD repeats span residues 2374–2412, 2436–2479, 2482–2519, 2532–2570, 2577–2619, 2627–2662, and 2670–2705; these read LVLA…TWLP, KLLS…SLPR, LLNQ…VWRL, KPVQ…IHTV, AALR…TYSL, RLRA…ILHL, and PPLP…VGAG. 2 positions are modified to phosphoserine: S2727 and S2730.

Belongs to the WD repeat neurobeachin family.

The protein resides in the endoplasmic reticulum. In terms of biological role, probably involved in thrombopoiesis. Plays a role in the development or secretion of alpha-granules, that contain several growth factors important for platelet biogenesis. The chain is Neurobeachin-like protein 2 (Nbeal2) from Mus musculus (Mouse).